The chain runs to 554 residues: Macrophage colony-stimulating factor 1 (554 aa).

The first 32 residues, 1–32 (MTAPGAAGRCPPTTWLGSLLLLVCLLASRSIT), serve as a signal peptide directing secretion. Over 33 to 496 (EEVSEYCSHM…GSFSPQLQES (464 aa)) the chain is Lumenal. Disulfide bonds link Cys39–Cys122, Cys80–Cys171, and Cys134–Cys178. Asn154 and Asn172 each carry an N-linked (GlcNAc...) asparagine glycan. The segment at 224 to 488 (EDSEGTEGSS…TGHERQSEGS (265 aa)) is disordered. Thr266 is subject to Phosphothreonine; by FAM20C. Ser309 is a glycosylation site (O-linked (Xyl...) (chondroitin sulfate) serine). The span at 344-354 (LSASSPLPASA) shows a compositional bias: low complexity. O-linked (GalNAc...) threonine glycosylation is found at Thr363 and Thr365. A compositionally biased stretch (polar residues) spans 404–433 (RISSLRPQGLSNPSTLSAQPQLSRSHSSGS). The O-glycosylated at one site stretch occupies residues 406 to 426 (SSLRPQGLSNPSTLSAQPQLS). Residues 440–453 (LEGRRSTRDRRSPA) are compositionally biased toward basic and acidic residues. Residues 497-517 (VFHLLVPSVILVLLAVGGLLF) form a helical membrane-spanning segment. Residues 518–554 (YRWRRRSHQEPQRADSPLEQPEGSPLTQDDRQVELPV) are Cytoplasmic-facing. Residues 526 to 554 (QEPQRADSPLEQPEGSPLTQDDRQVELPV) are disordered. Over residues 545 to 554 (QDDRQVELPV) the composition is skewed to basic and acidic residues.

In terms of assembly, homodimer or heterodimer; disulfide-linked. Likely to exist in multiple forms: homodimer consisting of 2 identical 150-200 kDa proteoglycan subunits, heterodimer consisting of a 150-200 kDa proteoglycan subunit and a truncated 43 kDa subunit, and homodimer consisting of 2 identical 43 kDa subunits. Interacts with CSF1R. N-glycosylated. Post-translationally, O-glycosylated; contains chondroitin sulfate. O-glycosylated with core 1 or possibly core 8 glycans. In terms of processing, O-glycosylated.

Its subcellular location is the cell membrane. It localises to the secreted. It is found in the extracellular space. Its function is as follows. Cytokine that plays an essential role in the regulation of survival, proliferation and differentiation of hematopoietic precursor cells, especially mononuclear phagocytes, such as macrophages and monocytes. Promotes the release of pro-inflammatory chemokines, and thereby plays an important role in innate immunity and in inflammatory processes. Plays an important role in the regulation of osteoclast proliferation and differentiation, the regulation of bone resorption, and is required for normal bone development. Required for normal male and female fertility. Promotes reorganization of the actin cytoskeleton, regulates formation of membrane ruffles, cell adhesion and cell migration. Plays a role in lipoprotein clearance. This chain is Macrophage colony-stimulating factor 1 (CSF1), found in Homo sapiens (Human).